Consider the following 449-residue polypeptide: Exodeoxyribonuclease 7 large subunit (449 aa).

It belongs to the XseA family. As to quaternary structure, heterooligomer composed of large and small subunits.

It is found in the cytoplasm. The enzyme catalyses Exonucleolytic cleavage in either 5'- to 3'- or 3'- to 5'-direction to yield nucleoside 5'-phosphates.. Its function is as follows. Bidirectionally degrades single-stranded DNA into large acid-insoluble oligonucleotides, which are then degraded further into small acid-soluble oligonucleotides. The protein is Exodeoxyribonuclease 7 large subunit of Salmonella paratyphi A (strain ATCC 9150 / SARB42).